Here is an 848-residue protein sequence, read N- to C-terminus: Adenylate cyclase (848 aa).

The tract at residues Met-1–Leu-535 is catalytic. The regulatory stretch occupies residues Lys-541–Ser-848. A Phosphohistidine; by CRR modification is found at His-609.

This sequence belongs to the adenylyl cyclase class-1 family.

It is found in the cytoplasm. The catalysed reaction is ATP = 3',5'-cyclic AMP + diphosphate. The polypeptide is Adenylate cyclase (cyaA) (Salmonella typhi).